The primary structure comprises 140 residues: Holo-[acyl-carrier-protein] synthase (140 aa).

Mg(2+) contacts are provided by D8 and E62.

It belongs to the P-Pant transferase superfamily. AcpS family. Mg(2+) is required as a cofactor.

It localises to the cytoplasm. It catalyses the reaction apo-[ACP] + CoA = holo-[ACP] + adenosine 3',5'-bisphosphate + H(+). Its function is as follows. Transfers the 4'-phosphopantetheine moiety from coenzyme A to a Ser of acyl-carrier-protein. The sequence is that of Holo-[acyl-carrier-protein] synthase from Cupriavidus taiwanensis (strain DSM 17343 / BCRC 17206 / CCUG 44338 / CIP 107171 / LMG 19424 / R1) (Ralstonia taiwanensis (strain LMG 19424)).